Reading from the N-terminus, the 617-residue chain is Procollagen galactosyltransferase 1 (617 aa).

The signal sequence occupies residues 1–31; sequence MAALPRGSRGLPLLPLLLLLPPLGGPRGADG. N-linked (GlcNAc...) asparagine glycans are attached at residues asparagine 91, asparagine 179, and asparagine 376. The segment covering 582–601 has biased composition (basic and acidic residues); the sequence is DRAKSQKMREQQALSREAKN. Residues 582 to 617 form a disordered region; that stretch reads DRAKSQKMREQQALSREAKNSDVLQSPLDSTARDEL. The Prevents secretion from ER signature appears at 614–617; the sequence is RDEL.

Belongs to the glycosyltransferase 25 family. Post-translationally, N-glycosylated.

The protein resides in the endoplasmic reticulum lumen. The catalysed reaction is (5R)-5-hydroxy-L-lysyl-[collagen] + UDP-alpha-D-galactose = (5R)-5-O-(beta-D-galactosyl)-5-hydroxy-L-lysyl-[collagen] + UDP + H(+). Its function is as follows. Beta-galactosyltransferase that transfers beta-galactose to hydroxylysine residues of type I collagen. By acting on collagen glycosylation, facilitates the formation of collagen triple helix. Also involved in the biosynthesis of collagen type IV. In Mus musculus (Mouse), this protein is Procollagen galactosyltransferase 1 (Colgalt1).